Here is a 204-residue protein sequence, read N- to C-terminus: Large ribosomal subunit protein eL15 (204 aa).

This sequence belongs to the eukaryotic ribosomal protein eL15 family. As to quaternary structure, component of the large ribosomal subunit.

The protein localises to the cytoplasm. Its function is as follows. Component of the large ribosomal subunit. The ribosome is a large ribonucleoprotein complex responsible for the synthesis of proteins in the cell. This is Large ribosomal subunit protein eL15 (rpl15) from Tachysurus fulvidraco (Yellow catfish).